The primary structure comprises 335 residues: Fimbrial adhesin PapGI (335 aa).

Positions 1–21 (MKKWFPAFLFLSLSGGNDALA) are cleaved as a signal peptide.

This sequence belongs to the adhesin PapG family. In terms of assembly, interacts with chaperone PapD. Assembly of the P pilus requires periplasmic chaperone PapD, in absence of the chaperone overexpression of this subunit is toxic, where the protein accumulates in the periplasm. PapD stimulates release of PapG from an inner membrane-associated form (where at least 1 disulfide bond can form) into the periplasm and also helps it achieve its correct digalactoside-binding conformation. Contains disulfide bonds.

It localises to the secreted. It is found in the fimbrium. Its function is as follows. Tip adhesin component of type P pili that binds preferentially to host cell glycosphingolipids such as globotriaosylceramide. This Escherichia coli protein is Fimbrial adhesin PapGI.